The sequence spans 122 residues: Acidic phospholipase A2 CTs-A3 (122 aa).

7 disulfides stabilise this stretch: Cys-26–Cys-116, Cys-28–Cys-44, Cys-43–Cys-95, Cys-49–Cys-122, Cys-50–Cys-88, Cys-57–Cys-81, and Cys-75–Cys-86. Positions 27, 29, and 31 each coordinate Ca(2+). Residue His-47 is part of the active site. Position 48 (Asp-48) interacts with Ca(2+). The active site involves Asp-89.

Ca(2+) is required as a cofactor. In terms of tissue distribution, expressed by the venom gland.

It is found in the secreted. The catalysed reaction is a 1,2-diacyl-sn-glycero-3-phosphocholine + H2O = a 1-acyl-sn-glycero-3-phosphocholine + a fatty acid + H(+). Snake venom phospholipase A2 (PLA2) that shows a moderate inhibition of ADP-induced human platelet aggregation when tested on platelet rich plasma. Exhibits moderate hydrolytic activities and prefers the anionic micelles (dPPC with deoxycholate) to the zwitterionic micelles (dPPC with Triton X-100). PLA2 catalyzes the calcium-dependent hydrolysis of the 2-acyl groups in 3-sn-phosphoglycerides. In Trimeresurus stejnegeri (Chinese green tree viper), this protein is Acidic phospholipase A2 CTs-A3.